Reading from the N-terminus, the 191-residue chain is Thymidine kinase (191 aa).

Residues 9–16 (GTMNSGKT) and 85–88 (DEAQ) each bind ATP. E86 functions as the Proton acceptor in the catalytic mechanism. The Zn(2+) site is built by C143, C146, C180, and H183.

Belongs to the thymidine kinase family. In terms of assembly, homotetramer.

It localises to the cytoplasm. It catalyses the reaction thymidine + ATP = dTMP + ADP + H(+). This Streptococcus gordonii (strain Challis / ATCC 35105 / BCRC 15272 / CH1 / DL1 / V288) protein is Thymidine kinase.